We begin with the raw amino-acid sequence, 361 residues long: Aromatic amino acid aminotransferase (361 aa).

K221 carries the post-translational modification N6-(pyridoxal phosphate)lysine.

This sequence belongs to the class-II pyridoxal-phosphate-dependent aminotransferase family. Homodimer. Requires pyridoxal 5'-phosphate as cofactor.

It carries out the reaction an aromatic L-alpha-amino acid + 2-oxoglutarate = an aromatic oxo-acid + L-glutamate. Its function is as follows. Aminotransferase that catalyzes the conversion of aromatic amino acids and 2-oxoglutarate into corresponding aromatic oxo acids and L-glutamate. This Mycobacterium marinum (strain ATCC BAA-535 / M) protein is Aromatic amino acid aminotransferase.